Consider the following 215-residue polypeptide: ATP-dependent Clp protease proteolytic subunit (215 aa).

The active-site Nucleophile is the Ser-115. Residue His-140 is part of the active site.

The protein belongs to the peptidase S14 family. As to quaternary structure, fourteen ClpP subunits assemble into 2 heptameric rings which stack back to back to give a disk-like structure with a central cavity, resembling the structure of eukaryotic proteasomes.

It is found in the cytoplasm. The catalysed reaction is Hydrolysis of proteins to small peptides in the presence of ATP and magnesium. alpha-casein is the usual test substrate. In the absence of ATP, only oligopeptides shorter than five residues are hydrolyzed (such as succinyl-Leu-Tyr-|-NHMec, and Leu-Tyr-Leu-|-Tyr-Trp, in which cleavage of the -Tyr-|-Leu- and -Tyr-|-Trp bonds also occurs).. In terms of biological role, cleaves peptides in various proteins in a process that requires ATP hydrolysis. Has a chymotrypsin-like activity. Plays a major role in the degradation of misfolded proteins. The protein is ATP-dependent Clp protease proteolytic subunit of Anaplasma marginale (strain Florida).